We begin with the raw amino-acid sequence, 491 residues long: Cytosolic Fe-S cluster assembly factor NAR1 (491 aa).

Residues Cys20, Cys65, Cys68, Cys71, Cys177, Cys232, Cys414, and Cys418 each contribute to the [4Fe-4S] cluster site.

This sequence belongs to the NARF family.

In terms of biological role, component of the cytosolic Fe/S protein assembly machinery. Required for maturation of extramitochondrial Fe/S proteins. May play a role in the transfer of pre-assembled Fe/S clusters to target apoproteins. This Yarrowia lipolytica (strain CLIB 122 / E 150) (Yeast) protein is Cytosolic Fe-S cluster assembly factor NAR1 (NAR1).